Consider the following 1068-residue polypeptide: Carbamoyl phosphate synthase large chain (1068 aa).

The segment at 1-401 is carboxyphosphate synthetic domain; that stretch reads MPRNNDIKKV…ALMKAIRSLE (401 aa). 12 residues coordinate ATP: arginine 129, arginine 169, glycine 175, glycine 176, arginine 208, isoleucine 210, glutamate 215, glycine 241, valine 242, histidine 243, glutamine 284, and glutamate 298. Residues 133-327 form the ATP-grasp 1 domain; sequence KDTMEKIGEP…IAKVTAKIAL (195 aa). Positions 284, 298, and 300 each coordinate Mg(2+). The Mn(2+) site is built by glutamine 284, glutamate 298, and asparagine 300. Residues 402–546 are oligomerization domain; sequence QHVDSLMSYD…YSVFGSENEA (145 aa). Residues 547–930 are carbamoyl phosphate synthetic domain; it reads AETNPQKKVL…ALYKAFEGAG (384 aa). The region spanning 672–862 is the ATP-grasp 2 domain; that stretch reads DEILQKTGIP…IVDLAARIIM (191 aa). Positions 708, 747, 749, 753, 778, 779, 780, 781, 821, and 833 each coordinate ATP. The Mg(2+) site is built by glutamine 821, glutamate 833, and asparagine 835. 3 residues coordinate Mn(2+): glutamine 821, glutamate 833, and asparagine 835. The region spanning 931-1068 is the MGS-like domain; it reads VELPKYKQMI…PVDIATVKNL (138 aa). The interval 931-1068 is allosteric domain; the sequence is VELPKYKQMI…PVDIATVKNL (138 aa).

The protein belongs to the CarB family. In terms of assembly, composed of two chains; the small (or glutamine) chain promotes the hydrolysis of glutamine to ammonia, which is used by the large (or ammonia) chain to synthesize carbamoyl phosphate. Tetramer of heterodimers (alpha,beta)4. Mg(2+) serves as cofactor. It depends on Mn(2+) as a cofactor.

The enzyme catalyses hydrogencarbonate + L-glutamine + 2 ATP + H2O = carbamoyl phosphate + L-glutamate + 2 ADP + phosphate + 2 H(+). The catalysed reaction is hydrogencarbonate + NH4(+) + 2 ATP = carbamoyl phosphate + 2 ADP + phosphate + 2 H(+). It functions in the pathway amino-acid biosynthesis; L-arginine biosynthesis; carbamoyl phosphate from bicarbonate: step 1/1. It participates in pyrimidine metabolism; UMP biosynthesis via de novo pathway; (S)-dihydroorotate from bicarbonate: step 1/3. In terms of biological role, large subunit of the glutamine-dependent carbamoyl phosphate synthetase (CPSase). CPSase catalyzes the formation of carbamoyl phosphate from the ammonia moiety of glutamine, carbonate, and phosphate donated by ATP, constituting the first step of 2 biosynthetic pathways, one leading to arginine and/or urea and the other to pyrimidine nucleotides. The large subunit (synthetase) binds the substrates ammonia (free or transferred from glutamine from the small subunit), hydrogencarbonate and ATP and carries out an ATP-coupled ligase reaction, activating hydrogencarbonate by forming carboxy phosphate which reacts with ammonia to form carbamoyl phosphate. This is Carbamoyl phosphate synthase large chain from Agathobacter rectalis (strain ATCC 33656 / DSM 3377 / JCM 17463 / KCTC 5835 / VPI 0990) (Eubacterium rectale).